The chain runs to 509 residues: Apurinic-apyrimidinic endonuclease 1 (509 aa).

The signal sequence occupies residues 1 to 24 (MPRHCCCFVFHFLLYMLLINIVKN). Residues 144–188 (EEKDEECDEKTKQDNNKENIKNETIVQKKKIDKNNKTKEKIKTKS) are disordered. Basic and acidic residues-rich tracts occupy residues 152–164 (EKTKQDNNKENIK) and 175–188 (DKNNKTKEKIKTKS). 9 residues coordinate Zn(2+): histidine 291, histidine 331, glutamate 367, aspartate 401, histidine 404, histidine 438, aspartate 451, histidine 453, and glutamate 483. Position 404 (histidine 404) interacts with Mn(2+). The Mn(2+) site is built by aspartate 451 and histidine 453.

Belongs to the AP endonuclease 2 family. It depends on Zn(2+) as a cofactor. Mn(2+) is required as a cofactor. Post-translationally, may be proteolytically cleaved.

The protein localises to the mitochondrion. Functionally, plays a role in mitochondrial DNA base excision repair (BER) pathway induced by oxidative stress. Has apurinic/apyrimidinic (AP) endonuclease activity towards double-stranded DNA (dsDNA) with a preference for C as opposite base. Has 3'-phosphatase activity; removes 3'-phosphate from blunt-end, recessed, and gapped DNA templates and thus, removes 3'-blocks for DNA polymerase activity during BER. Lacks 3'-5' exonuclease activity and does not cleave damaged bases by nucleotide incision repair (NIR). The sequence is that of Apurinic-apyrimidinic endonuclease 1 from Plasmodium berghei (strain Anka).